The chain runs to 103 residues: Large ribosomal subunit protein bL21 (103 aa).

It belongs to the bacterial ribosomal protein bL21 family. Part of the 50S ribosomal subunit. Contacts protein L20.

Its function is as follows. This protein binds to 23S rRNA in the presence of protein L20. This chain is Large ribosomal subunit protein bL21, found in Shewanella frigidimarina (strain NCIMB 400).